Consider the following 612-residue polypeptide: Methionine--tRNA ligase (612 aa).

Residues 12 to 22 (PYANGPRHIGH) carry the 'HIGH' region motif. The Zn(2+) site is built by C144, C147, C157, and C160. A 'KMSKS' region motif is present at residues 350 to 354 (KFSSS). ATP is bound at residue S353. The disordered stretch occupies residues 580–612 (IQPGTQLSKPKPLFPKLDPELAETGPEWAPVQK).

It belongs to the class-I aminoacyl-tRNA synthetase family. MetG type 1 subfamily. In terms of assembly, monomer. It depends on Zn(2+) as a cofactor.

The protein resides in the cytoplasm. The catalysed reaction is tRNA(Met) + L-methionine + ATP = L-methionyl-tRNA(Met) + AMP + diphosphate. In terms of biological role, is required not only for elongation of protein synthesis but also for the initiation of all mRNA translation through initiator tRNA(fMet) aminoacylation. This is Methionine--tRNA ligase from Corynebacterium jeikeium (strain K411).